A 107-amino-acid polypeptide reads, in one-letter code: MTTLSPIEGMLQQLRGLAQTAAGTSSQAAAPAASGGFAGELQRSLSRINATQERAYGLSEAFELGKPGVALNDVMIELQKANVSFQTGVQVRNRLVQAYQEMMNMPV.

This sequence belongs to the FliE family.

The protein resides in the bacterial flagellum basal body. The sequence is that of Flagellar hook-basal body complex protein FliE from Cupriavidus pinatubonensis (strain JMP 134 / LMG 1197) (Cupriavidus necator (strain JMP 134)).